We begin with the raw amino-acid sequence, 78 residues long: uncharacterized protein (78 aa).

The disordered stretch occupies residues 1–78 (MSSNSNTDHS…VDLEGPKDEQ (78 aa)). Basic and acidic residues-rich tracts occupy residues 10–33 (STGDNRSKSEKQTDLRNALRETES) and 63–78 (LNLKEPVDLEGPKDEQ).

This is an uncharacterized protein from Schizosaccharomyces pombe (strain 972 / ATCC 24843) (Fission yeast).